The sequence spans 154 residues: Protein X (154 aa).

Positions 68–117 are mitochondrial targeting sequence; it reads PCALRFTSARRMETTVNAPQSLPTPLHKRTLGLSPRSTTWIEEYIKDCVF.

This sequence belongs to the orthohepadnavirus protein X family. In terms of assembly, may form homodimer. May interact with host CEBPA, CFLAR, CREB1, DDB1, E4F1, HBXIP, HSPD1/HSP60, NFKBIA, POLR2E and SMAD4. Interacts with host SMC5-SMC6 complex and induces its degradation. Interacts with host TRPC4AP; leading to prevent ubiquitination of TRPC4AP. Interacts with host PLSCR1; this interaction promotes ubiquitination and degradation of HBx and impairs HBx-mediated cell proliferation. A fraction may be phosphorylated in insect cells and HepG2 cells, a human hepatoblastoma cell line. Phosphorylated in vitro by host protein kinase C or mitogen-activated protein kinase. N-acetylated in insect cells.

Its subcellular location is the host cytoplasm. It localises to the host nucleus. It is found in the host mitochondrion. In terms of biological role, multifunctional protein that plays a role in silencing host antiviral defenses and promoting viral transcription. Does not seem to be essential for HBV infection. May be directly involved in development of cirrhosis and liver cancer (hepatocellular carcinoma). Most of cytosolic activities involve modulation of cytosolic calcium. The effect on apoptosis is controversial depending on the cell types in which the studies have been conducted. May induce apoptosis by localizing in mitochondria and causing loss of mitochondrial membrane potential. May also modulate apoptosis by binding host CFLAR, a key regulator of the death-inducing signaling complex (DISC). Promotes viral transcription by using the host E3 ubiquitin ligase DDB1 to target the SMC5-SMC6 complex to proteasomal degradation. This host complex would otherwise bind to viral episomal DNA, and prevents its transcription. Moderately stimulates transcription of many different viral and cellular transcription elements. Promoters and enhancers stimulated by HBx contain DNA binding sites for NF-kappa-B, AP-1, AP-2, c-EBP, ATF/CREB, or the calcium-activated factor NF-AT. The chain is Protein X from Homo sapiens (Human).